The chain runs to 558 residues: Phosphatidylserine lipase ABHD16A (558 aa).

Helical transmembrane passes span 60–80 (ILAL…FAFF) and 93–113 (VVPF…VACL). Residues 114-558 (RGIGRWTNPQ…AQNFQMPWHL (445 aa)) are Cytoplasmic-facing. Positions 281–407 (LVICCEGNAG…LVTRTVRQHL (127 aa)) constitute an AB hydrolase-1 domain. Active-site charge relay system residues include serine 355, aspartate 430, and histidine 507.

Belongs to the AB hydrolase superfamily. ABHD16 family.

The protein resides in the membrane. It catalyses the reaction 1-heptadecanoyl-2-(5Z,8Z,11Z,14Z-eicosatetraenoyl)-sn-glycero-3-phosphoserine + H2O = 1-heptadecanoyl-sn-glycero-3-phosphoserine + (5Z,8Z,11Z,14Z)-eicosatetraenoate + H(+). The catalysed reaction is 1-hexadecanoyl-2-(9Z-octadecenoyl)-sn-glycero-3-phospho-L-serine + H2O = 1-hexadecanoyl-sn-glycero-3-phospho-L-serine + (9Z)-octadecenoate + H(+). It carries out the reaction 1-octadecanoyl-2-(9Z,12Z-octadecadienoyl)-sn-glycero-3-phosphoserine + H2O = 1-octadecanoyl-sn-glycero-3-phosphoserine + (9Z,12Z)-octadecadienoate + H(+). The enzyme catalyses 1-heptadecanoyl-2-(5Z,8Z,11Z,14Z-eicosatetraenoyl)-sn-glycero-3-phosphocholine + H2O = 1-heptadecanoyl-sn-glycero-3-phosphocholine + (5Z,8Z,11Z,14Z)-eicosatetraenoate + H(+). It catalyses the reaction 1-hexadecanoyl-2-(9Z-octadecenoyl)-sn-glycero-3-phosphoglycerol + H2O = 1-hexadecanoyl-sn-glycero-3-phosphoglycerol + (9Z)-octadecenoate + H(+). The catalysed reaction is 1-hexadecanoyl-2-(9Z-octadecenoyl)-sn-glycero-3-phospho-(1D-myo-inositol) + H2O = 1-hexadecanoyl-sn-glycero-3-phospho-(1D-myo-inositol) + (9Z)-octadecenoate + H(+). It carries out the reaction 1-heptadecanoyl-2-(5Z,8Z,11Z,14Z-eicosatetraenoyl)-sn-glycero-3-phosphoethanolamine + H2O = 1-heptadecanoyl-sn-glycero-3-phosphoethanolamine + (5Z,8Z,11Z,14Z)-eicosatetraenoate + H(+). The enzyme catalyses 1-hexadecanoyl-2-(9Z-octadecenoyl)-sn-glycero-3-phospho-(1'-sn-glycerol) + H2O = 1-hexadecanoyl-sn-glycero-3-phospho-(1'-sn-glycerol) + (9Z)-octadecenoate + H(+). It catalyses the reaction Hydrolyzes glycerol monoesters of long-chain fatty acids.. The catalysed reaction is 1-tetradecanoylglycerol + H2O = tetradecanoate + glycerol + H(+). It carries out the reaction 2-hexadecanoylglycerol + H2O = glycerol + hexadecanoate + H(+). The enzyme catalyses 1-(9Z-octadecenoyl)-glycerol + H2O = glycerol + (9Z)-octadecenoate + H(+). It catalyses the reaction 2-(9Z-octadecenoyl)-glycerol + H2O = glycerol + (9Z)-octadecenoate + H(+). The catalysed reaction is 2-(9Z,12Z-octadecadienoyl)-glycerol + H2O = (9Z,12Z)-octadecadienoate + glycerol + H(+). It carries out the reaction 1-(5Z,8Z,11Z,14Z-eicosatetraenoyl)-glycerol + H2O = glycerol + (5Z,8Z,11Z,14Z)-eicosatetraenoate + H(+). The enzyme catalyses 2-(5Z,8Z,11Z,14Z-eicosatetraenoyl)-glycerol + H2O = glycerol + (5Z,8Z,11Z,14Z)-eicosatetraenoate + H(+). It catalyses the reaction prostaglandin D2-1-glycerol ester + H2O = prostaglandin D2 + glycerol + H(+). The catalysed reaction is 2-glyceryl-15-deoxy-Delta(12,14)-prostaglandin J2 + H2O = 15-deoxy-Delta(12,14)-prostaglandin J2 + glycerol + H(+). It carries out the reaction 1-(9Z,12Z-octadecadienoyl)-glycerol + H2O = (9Z,12Z)-octadecadienoate + glycerol + H(+). In terms of biological role, phosphatidylserine (PS) lipase that mediates the hydrolysis of phosphatidylserine to generate lysophosphatidylserine (LPS). LPS constitutes a class of signaling lipids that regulates immunological and neurological processes. Has no activity towards diacylglycerol, triacylglycerol or lysophosphatidylserine lipase. Also has monoacylglycerol lipase activity, with preference for 1-(9Z,12Z-octadecadienoyl)-glycerol (1-LG) and 2-glyceryl-15-deoxy-Delta(12,14)-prostaglandin J2 (15d-PGJ(2)-G). This Macaca fascicularis (Crab-eating macaque) protein is Phosphatidylserine lipase ABHD16A.